A 202-amino-acid polypeptide reads, in one-letter code: FMN-dependent NADH:quinone oxidoreductase (202 aa).

FMN-binding positions include Ser-12 and Ser-21–Ser-23.

Belongs to the azoreductase type 1 family. As to quaternary structure, homodimer. The cofactor is FMN.

It catalyses the reaction 2 a quinone + NADH + H(+) = 2 a 1,4-benzosemiquinone + NAD(+). The catalysed reaction is N,N-dimethyl-1,4-phenylenediamine + anthranilate + 2 NAD(+) = 2-(4-dimethylaminophenyl)diazenylbenzoate + 2 NADH + 2 H(+). In terms of biological role, quinone reductase that provides resistance to thiol-specific stress caused by electrophilic quinones. Functionally, also exhibits azoreductase activity. Catalyzes the reductive cleavage of the azo bond in aromatic azo compounds to the corresponding amines. This chain is FMN-dependent NADH:quinone oxidoreductase, found in Mycoplasma mobile (strain ATCC 43663 / 163K / NCTC 11711) (Mesomycoplasma mobile).